The primary structure comprises 101 residues: Putative pterin-4-alpha-carbinolamine dehydratase (101 aa).

Belongs to the pterin-4-alpha-carbinolamine dehydratase family.

The catalysed reaction is (4aS,6R)-4a-hydroxy-L-erythro-5,6,7,8-tetrahydrobiopterin = (6R)-L-erythro-6,7-dihydrobiopterin + H2O. This Streptomyces coelicolor (strain ATCC BAA-471 / A3(2) / M145) protein is Putative pterin-4-alpha-carbinolamine dehydratase.